A 270-amino-acid polypeptide reads, in one-letter code: Phosphodiesterase YaeI (270 aa).

A divalent metal cation-binding residues include Asp56, His58, Asp88, Asn120, His209, and His211.

It belongs to the metallophosphoesterase superfamily. The cofactor is a divalent metal cation.

In terms of biological role, shows phosphodiesterase activity, hydrolyzing phosphodiester bond in the artificial chromogenic substrate bis-p-nitrophenyl phosphate (bis-pNPP). This is Phosphodiesterase YaeI (yaeI) from Escherichia coli (strain K12).